The primary structure comprises 139 residues: Small ribosomal subunit protein uS19 (139 aa).

The protein belongs to the universal ribosomal protein uS19 family.

Functionally, protein S19 forms a complex with S13 that binds strongly to the 16S ribosomal RNA. The sequence is that of Small ribosomal subunit protein uS19 from Ignicoccus hospitalis (strain KIN4/I / DSM 18386 / JCM 14125).